A 425-amino-acid polypeptide reads, in one-letter code: UDP-N-acetylglucosamine 1-carboxyvinyltransferase (425 aa).

25 to 26 (KN) is a phosphoenolpyruvate binding site. Arg95 is a UDP-N-acetyl-alpha-D-glucosamine binding site. The active-site Proton donor is the Cys119. A 2-(S-cysteinyl)pyruvic acid O-phosphothioketal modification is found at Cys119. Residues 124–128 (RPVDQ), Asp306, and Ile328 each bind UDP-N-acetyl-alpha-D-glucosamine.

This sequence belongs to the EPSP synthase family. MurA subfamily.

It localises to the cytoplasm. The enzyme catalyses phosphoenolpyruvate + UDP-N-acetyl-alpha-D-glucosamine = UDP-N-acetyl-3-O-(1-carboxyvinyl)-alpha-D-glucosamine + phosphate. Its pathway is cell wall biogenesis; peptidoglycan biosynthesis. Its function is as follows. Cell wall formation. Adds enolpyruvyl to UDP-N-acetylglucosamine. The sequence is that of UDP-N-acetylglucosamine 1-carboxyvinyltransferase from Thermus thermophilus (strain ATCC BAA-163 / DSM 7039 / HB27).